A 431-amino-acid chain; its full sequence is Phosphate regulon sensor protein PhoR (431 aa).

Over 1 to 9 (MLERLSWKR) the chain is Cytoplasmic. The helical transmembrane segment at 10-28 (LVLELLLCCLPAFILGAFF) threads the bilayer. Over 29–32 (GYLP) the chain is Periplasmic. The helical transmembrane segment at 33–51 (WFLLASVTGLLIWHFWNLL) threads the bilayer. Over 52-431 (RLSWWLWVDR…PERLIAKNSD (380 aa)) the chain is Cytoplasmic. Residues 96-172 (LIKRFRSGAE…RPLNLVLNTG (77 aa)) form the PAS domain. The Histidine kinase domain occupies 210 to 425 (NVSHELRTPL…RFSFVIPERL (216 aa)). Residue His-213 is modified to Phosphohistidine; by autocatalysis.

The protein localises to the cell inner membrane. The enzyme catalyses ATP + protein L-histidine = ADP + protein N-phospho-L-histidine.. In terms of biological role, member of the two-component regulatory system PhoR/PhoB involved in the phosphate regulon genes expression. PhoR may function as a membrane-associated protein kinase that phosphorylates PhoB in response to environmental signals. This is Phosphate regulon sensor protein PhoR (phoR) from Escherichia coli (strain K12).